We begin with the raw amino-acid sequence, 85 residues long: MSKNQLNLQDAFLNQVRKENVGVTIFLINGFQLKGFVKGFDNFTVILESEGKQHMIYKHAISTIIPQRPVNTYLAKGGNEENTPS.

Residues aspartate 10–valine 70 form the Sm domain.

Belongs to the Hfq family. As to quaternary structure, homohexamer.

RNA chaperone that binds small regulatory RNA (sRNAs) and mRNAs to facilitate mRNA translational regulation in response to envelope stress, environmental stress and changes in metabolite concentrations. Also binds with high specificity to tRNAs. This chain is RNA-binding protein Hfq, found in Carboxydothermus hydrogenoformans (strain ATCC BAA-161 / DSM 6008 / Z-2901).